We begin with the raw amino-acid sequence, 471 residues long: Chitobiosyldiphosphodolichol beta-mannosyltransferase (471 aa).

At 1-31 the chain is on the lumenal side; it reads MDTSSVTMHTERACCHQAQRAVAAMLDKAPS. The chain crosses the membrane as a helical span at residues 32-52; that stretch reads WLIWTAVLYVGLPFMLYWAVP. Over 53-126 the chain is Cytoplasmic; sequence YLFYHNKTKS…ALPGASNAGK (74 aa). An intramembrane region (helical) is located at residues 127–147; it reads SLGQTARKVVLQTCHIVRQLW. Residues 148-471 lie on the Cytoplasmic side of the membrane; it reads ELRGCDYILI…MSELQVVRQS (324 aa).

This sequence belongs to the glycosyltransferase group 1 family.

Its subcellular location is the endoplasmic reticulum membrane. The catalysed reaction is an N,N'-diacetylchitobiosyl-diphospho-di-trans,poly-cis-dolichol + GDP-alpha-D-mannose = a beta-D-Man-(1-&gt;4)-beta-D-GlcNAc-(1-&gt;4)-alpha-D-GlcNAc-diphospho-di-trans,poly-cis-dolichol + GDP + H(+). The protein operates within protein modification; protein glycosylation. Functionally, participates in the formation of the lipid-linked precursor oligosaccharide for N-glycosylation. Involved in assembling the dolichol-pyrophosphate-GlcNAc(2)-Man(5) intermediate on the cytoplasmic surface of the ER. This Eremothecium gossypii (strain ATCC 10895 / CBS 109.51 / FGSC 9923 / NRRL Y-1056) (Yeast) protein is Chitobiosyldiphosphodolichol beta-mannosyltransferase (ALG1).